A 220-amino-acid chain; its full sequence is 7-cyano-7-deazaguanine synthase 1 (220 aa).

Residue 10–20 (FSGGIDSTVLL) coordinates ATP. 4 residues coordinate Zn(2+): Cys183, Cys191, Cys194, and Cys197.

Belongs to the QueC family. In terms of assembly, homodimer. Requires Zn(2+) as cofactor.

The catalysed reaction is 7-carboxy-7-deazaguanine + NH4(+) + ATP = 7-cyano-7-deazaguanine + ADP + phosphate + H2O + H(+). It participates in purine metabolism; 7-cyano-7-deazaguanine biosynthesis. In terms of biological role, catalyzes the ATP-dependent conversion of 7-carboxy-7-deazaguanine (CDG) to 7-cyano-7-deazaguanine (preQ(0)). The polypeptide is 7-cyano-7-deazaguanine synthase 1 (Desulfitobacterium hafniense (strain Y51)).